A 156-amino-acid chain; its full sequence is Large ribosomal subunit protein bL17 (156 aa).

Positions 127–156 (RATRAAASKKAAEEKAAEAAEEKDEAAEEK) are disordered. Over residues 136–146 (KAAEEKAAEAA) the composition is skewed to basic and acidic residues. Residues 147–156 (EEKDEAAEEK) are compositionally biased toward acidic residues.

It belongs to the bacterial ribosomal protein bL17 family. As to quaternary structure, part of the 50S ribosomal subunit. Contacts protein L32.

The protein is Large ribosomal subunit protein bL17 of Corynebacterium urealyticum (strain ATCC 43042 / DSM 7109).